The sequence spans 190 residues: Probable thymidylate kinase (190 aa).

An ATP-binding site is contributed by 7-14 (GIDGAGKT).

The protein belongs to the thymidylate kinase family.

The catalysed reaction is dTMP + ATP = dTDP + ADP. This is Probable thymidylate kinase from Thermoplasma volcanium (strain ATCC 51530 / DSM 4299 / JCM 9571 / NBRC 15438 / GSS1).